Consider the following 271-residue polypeptide: Calretinin (271 aa).

EF-hand domains follow at residues 16 to 51, 63 to 98, 107 to 142, 151 to 186, 195 to 230, and 235 to 270; these read LTASQFLEIWKHFDADGNGYIEGKELENFFQELEKA, NFGEKMKEFMQKYDKNSDGKIEMAELAQILPTEENF, GSSAEFMEAWRKYDTDRSGYIEANELKGFLSDLLKK, KLQEYTQTILRMFDLNGDGKLGLSEMSRLLPVQENF, LTSEEFNAIFTFYDKDGSGYIDENELDALLKDLYEK, and MNIQQLTTYRKSVMSLAEAGKLYRKDLEIVLCSEPP. 25 residues coordinate Ca(2+): Asp-29, Asp-31, Asn-33, Tyr-35, Glu-40, Asp-76, Asn-78, Asp-80, Lys-82, Glu-87, Asp-120, Asp-122, Ser-124, Tyr-126, Glu-131, Asp-164, Asn-166, Asp-168, Lys-170, Glu-175, Asp-208, Asp-210, Ser-212, Tyr-214, and Glu-219. A Phosphotyrosine modification is found at Tyr-214.

It belongs to the calbindin family. In terms of tissue distribution, widely expressed in central nervous system. Expressed in type I unipolar brush cells of the cerebellum (at protein level).

The protein localises to the synapse. It is found in the cell projection. The protein resides in the dendrite. Calcium-binding protein involved in calcium homeostasis and signal transduction. It plays a critical role in buffering intracellular calcium levels and modulating calcium-dependent signaling pathways. Predominantly expressed in specific neuronal populations, influences synaptic plasticity and neuronal excitability, contributing to learning and memory. During embryonic development, it facilitates neuronal differentiation and maturation. This is Calretinin (Calb2) from Mus musculus (Mouse).